Consider the following 267-residue polypeptide: 4-hydroxy-tetrahydrodipicolinate reductase (267 aa).

NAD(+) is bound at residue 8-13 (GASGRM). NADP(+) is bound at residue Arg-35. Residues 98 to 100 (GTT) and 122 to 125 (APNM) each bind NAD(+). The active-site Proton donor/acceptor is His-155. Residue His-156 participates in (S)-2,3,4,5-tetrahydrodipicolinate binding. The active-site Proton donor is the Lys-159. Residue 165 to 166 (GT) coordinates (S)-2,3,4,5-tetrahydrodipicolinate.

This sequence belongs to the DapB family.

The protein resides in the cytoplasm. The enzyme catalyses (S)-2,3,4,5-tetrahydrodipicolinate + NAD(+) + H2O = (2S,4S)-4-hydroxy-2,3,4,5-tetrahydrodipicolinate + NADH + H(+). It catalyses the reaction (S)-2,3,4,5-tetrahydrodipicolinate + NADP(+) + H2O = (2S,4S)-4-hydroxy-2,3,4,5-tetrahydrodipicolinate + NADPH + H(+). Its pathway is amino-acid biosynthesis; L-lysine biosynthesis via DAP pathway; (S)-tetrahydrodipicolinate from L-aspartate: step 4/4. Catalyzes the conversion of 4-hydroxy-tetrahydrodipicolinate (HTPA) to tetrahydrodipicolinate. The protein is 4-hydroxy-tetrahydrodipicolinate reductase of Hahella chejuensis (strain KCTC 2396).